A 264-amino-acid chain; its full sequence is 3-methyl-2-oxobutanoate hydroxymethyltransferase (264 aa).

The Mg(2+) site is built by Asp45 and Asp84. 3-methyl-2-oxobutanoate-binding positions include 45-46 (DS), Asp84, and Lys113. Residue Glu115 coordinates Mg(2+). The active-site Proton acceptor is Glu182.

It belongs to the PanB family. Homodecamer; pentamer of dimers. Mg(2+) serves as cofactor.

Its subcellular location is the cytoplasm. The catalysed reaction is 3-methyl-2-oxobutanoate + (6R)-5,10-methylene-5,6,7,8-tetrahydrofolate + H2O = 2-dehydropantoate + (6S)-5,6,7,8-tetrahydrofolate. Its pathway is cofactor biosynthesis; (R)-pantothenate biosynthesis; (R)-pantoate from 3-methyl-2-oxobutanoate: step 1/2. Functionally, catalyzes the reversible reaction in which hydroxymethyl group from 5,10-methylenetetrahydrofolate is transferred onto alpha-ketoisovalerate to form ketopantoate. The protein is 3-methyl-2-oxobutanoate hydroxymethyltransferase of Helicobacter hepaticus (strain ATCC 51449 / 3B1).